A 244-amino-acid polypeptide reads, in one-letter code: Ribosomal RNA small subunit methyltransferase G (244 aa).

Residues Gly79, Phe84, 102-104 (DST), 130-131 (AE), and Arg149 contribute to the S-adenosyl-L-methionine site. The interval 225 to 244 (DRYPRREGVPNQQPLFWSAK) is disordered. Residues 234 to 244 (PNQQPLFWSAK) show a composition bias toward polar residues.

The protein belongs to the methyltransferase superfamily. RNA methyltransferase RsmG family.

It localises to the cytoplasm. In terms of biological role, specifically methylates the N7 position of a guanine in 16S rRNA. This Deinococcus deserti (strain DSM 17065 / CIP 109153 / LMG 22923 / VCD115) protein is Ribosomal RNA small subunit methyltransferase G.